Here is a 423-residue protein sequence, read N- to C-terminus: Serine--tRNA ligase 1 (423 aa).

231–233 provides a ligand contact to L-serine; it reads TAE. 262–264 provides a ligand contact to ATP; that stretch reads RSE. An L-serine-binding site is contributed by glutamate 285. ATP is bound at residue 349-352; sequence EISS. Residue serine 384 participates in L-serine binding.

This sequence belongs to the class-II aminoacyl-tRNA synthetase family. Type-1 seryl-tRNA synthetase subfamily. As to quaternary structure, homodimer. The tRNA molecule binds across the dimer.

Its subcellular location is the cytoplasm. It catalyses the reaction tRNA(Ser) + L-serine + ATP = L-seryl-tRNA(Ser) + AMP + diphosphate + H(+). The enzyme catalyses tRNA(Sec) + L-serine + ATP = L-seryl-tRNA(Sec) + AMP + diphosphate + H(+). Its pathway is aminoacyl-tRNA biosynthesis; selenocysteinyl-tRNA(Sec) biosynthesis; L-seryl-tRNA(Sec) from L-serine and tRNA(Sec): step 1/1. Its function is as follows. Catalyzes the attachment of serine to tRNA(Ser). Is also able to aminoacylate tRNA(Sec) with serine, to form the misacylated tRNA L-seryl-tRNA(Sec), which will be further converted into selenocysteinyl-tRNA(Sec). This chain is Serine--tRNA ligase 1, found in Enterococcus faecalis (strain ATCC 700802 / V583).